The sequence spans 235 residues: 2-C-methyl-D-erythritol 4-phosphate cytidylyltransferase (235 aa).

It belongs to the IspD/TarI cytidylyltransferase family. IspD subfamily.

It carries out the reaction 2-C-methyl-D-erythritol 4-phosphate + CTP + H(+) = 4-CDP-2-C-methyl-D-erythritol + diphosphate. It participates in isoprenoid biosynthesis; isopentenyl diphosphate biosynthesis via DXP pathway; isopentenyl diphosphate from 1-deoxy-D-xylulose 5-phosphate: step 2/6. Catalyzes the formation of 4-diphosphocytidyl-2-C-methyl-D-erythritol from CTP and 2-C-methyl-D-erythritol 4-phosphate (MEP). The chain is 2-C-methyl-D-erythritol 4-phosphate cytidylyltransferase from Synechococcus sp. (strain JA-3-3Ab) (Cyanobacteria bacterium Yellowstone A-Prime).